The primary structure comprises 451 residues: REST corepressor 3 (451 aa).

The interval 1-55 (MPGMMEKGPELLGKSRSANGGAKSPAGGGGSSANGGLHFSEPESGCSSDDEHGDV) is disordered. The region spanning 55-139 (VGMRVGAEYQ…KSLADLPNFT (85 aa)) is the ELM2 domain. Residue Lys76 forms a Glycyl lysine isopeptide (Lys-Gly) (interchain with G-Cter in SUMO2) linkage. In terms of domain architecture, SANT spans 140-191 (PFPDEWTVEDKVLFEQAFSFHGKSFHRIQQMLPDKTIASLVKYYYSWKKTRS). Positions 204-275 (ANRHNQGDSD…SQRSKCRPPK (72 aa)) are disordered. A phosphoserine mark is found at Ser212 and Ser227. Residues 218 to 240 (EAHPMDGNDSDYDPKKEAKREGN) show a composition bias toward basic and acidic residues. Residue Lys249 forms a Glycyl lysine isopeptide (Lys-Gly) (interchain with G-Cter in SUMO2) linkage. Over residues 261 to 273 (QHRHHSQRSKCRP) the composition is skewed to basic residues. Residues 293–329 (AANTILRQLDMELISLKRQVQNAKQVNSALKQKMEGG) adopt a coiled-coil conformation. Residues 333–451 (FKPPEAQTPQ…IQTDSQPSLH (119 aa)) are disordered. A compositionally biased stretch (pro residues) spans 349–361 (PSPPAPSSTPTPT). Over residues 375 to 384 (RPTLPAAPAL) the composition is skewed to low complexity. Arg401 and Arg413 each carry asymmetric dimethylarginine. A compositionally biased stretch (polar residues) spans 431-451 (VGGQQPPSLIGIQTDSQPSLH).

Belongs to the CoREST family.

It localises to the nucleus. Its function is as follows. May act as a component of a corepressor complex that represses transcription. This chain is REST corepressor 3 (Rcor3), found in Mus musculus (Mouse).